The primary structure comprises 745 residues: Cytoplasmic polyadenylation element-binding protein 3 (745 aa).

3 disordered regions span residues 1–45, 94–180, and 204–283; these read MNLN…KSPT, VGSK…TNNS, and NKAN…FGEL. The segment covering 162–175 has biased composition (basic and acidic residues); that stretch reads LNFERDAEQKKDST. The segment covering 219-229 has biased composition (polar residues); sequence ETPTDSPQKGF. Over residues 230-240 the composition is skewed to low complexity; it reads SSSTESSPSDS. Residues 241 to 255 are compositionally biased toward polar residues; the sequence is MNQFPSREHFTSANE. Positions 264–276 are enriched in basic and acidic residues; that stretch reads FQQEHGNKNRDSD. The 23-residue stretch at 297 to 319 folds into the RRM domain; the sequence is IFVGGVPWDITEAALKDSFGEFG.

Functionally, cytoplasmic polyadenylation element binding protein that binds to and regulates the translation of specific mRNAs. May not be required for oogenesis. In Caenorhabditis elegans, this protein is Cytoplasmic polyadenylation element-binding protein 3 (cpb-3).